We begin with the raw amino-acid sequence, 1045 residues long: Desmoglein-1 (1045 aa).

A signal peptide spans 1–23 (MNWPFFRTAAVLFIFLVVLEVNS). Positions 24–49 (EFRIQVRDYNTKNGTIKWHSIRRQKR) are excised as a propeptide. Residues asparagine 36, asparagine 110, and asparagine 180 are each glycosylated (N-linked (GlcNAc...) asparagine). 4 Cadherin domains span residues 50 to 158 (EWIK…PVFS), 159 to 270 (MSTF…PYME), 271 to 385 (LPSN…GSVF), and 386 to 496 (RPGS…TDGA). Topologically, residues 50-546 (EWIKFAAACR…HPLDNVHFGP (497 aa)) are extracellular. The chain crosses the membrane as a helical span at residues 547–567 (AGIGLLIMGFLVLGLVPFLLM). At 568-1045 (YCDCGGAPGG…TKYSTVQYTK (478 aa)) the chain is on the cytoplasmic side. Desmoglein repeat repeat units lie at residues 814 to 840 (TYPS…TMTE), 841 to 870 (SYTT…ERVV), 871 to 900 (GPIS…ERVI), 901 to 928 (APNS…ERVI), and 929 to 957 (RPTS…ERVV). The segment at 1019–1045 (FSNTLGSASPTTTRSRITKYSTVQYTK) is disordered. Polar residues predominate over residues 1020 to 1045 (SNTLGSASPTTTRSRITKYSTVQYTK).

Binds to JUP/plakoglobin. Interacts with PKP2. Interacts with DSC3; there is evidence to suggest that the interaction promotes cell-cell adhesion of keratinocytes.

The protein resides in the cell membrane. It is found in the cell junction. The protein localises to the desmosome. Its subcellular location is the cytoplasm. It localises to the nucleus. In terms of biological role, component of intercellular desmosome junctions. Involved in the interaction of plaque proteins and intermediate filaments mediating cell-cell adhesion. In Sus scrofa (Pig), this protein is Desmoglein-1 (DSG1).